A 2144-amino-acid chain; its full sequence is Polyketide synthase-like protein Preu9 (2144 aa).

The 250-residue stretch at 1–250 (MYALHLAVNA…GANAHCIIDH (250 aa)) folds into the Ketosynthase family 3 (KS3) domain. The tract at residues 276–325 (QNGHLNEFAANGTTNAPSRDHRNGITDGRADGNTNGHPNANGDVGGNPIN) is disordered. The span at 293–305 (SRDHRNGITDGRA) shows a compositional bias: basic and acidic residues. A malonyl-CoA:ACP transacylase (MAT) region spans residues 435–738 (FVFTGQGAQW…KSPVEQILKS (304 aa)). The segment at 827–965 (HDLLGSKVVG…GCVKLIIKSS (139 aa)) is N-terminal hotdog fold. Residues 827 to 1137 (HDLLGSKVVG…ERLRCVSYSR (311 aa)) are dehydratase (DH) domain. The region spanning 827 to 1141 (HDLLGSKVVG…CVSYSRISSD (315 aa)) is the PKS/mFAS DH domain. Histidine 859 serves as the catalytic Proton acceptor; for dehydratase activity. Residues 979 to 1141 (TLRPVDVRAW…CVSYSRISSD (163 aa)) form a C-terminal hotdog fold region. The active-site Proton donor; for dehydratase activity is aspartate 1050. The segment at 1305–1494 (TGIYPQLHRI…GLDVVLDDFP (190 aa)) is methyltransferase (MT) domain. The segment at 1731 to 2042 (GVPNSLCFAS…LANMIGKLVV (312 aa)) is enoyl reductase (ER) domain.

Its function is as follows. Polyketide synthase-like protein that lacks important domains such as carrier domain and does probably not function as a polyketide synthase. The sequence is that of Polyketide synthase-like protein Preu9 from Preussia isomera (Coprophilous fungus).